We begin with the raw amino-acid sequence, 456 residues long: MSQPPGTNIFTVSRLNSTVRKLLEMEMGQVWLSAEISNFSQPSSGHWYFTLKDDTAQVRCAMFRNGNRRVTFRPQNGQQVLVRATITLYEPRGDYQLIAESMQPAGDGLLQQQFDQLKQRLMAEGLFEQAHKQPLPDPARQVGVITSSSGAALHDVLRVLQRRDPSLPVVIYPTPVQGAEAPTGIVRAIELANARKECDVLIVGRGGGSLEDLWSFNDERVARAIFASRIPIVSAVGHETDVTIADFVADLRAPTPSAAAELVSRDQIERLRQLQQQQQRMEMAMDYYLARQQSTFTRLQHRLQQQHPQLRLARQQTALMKVQRRLDDALQQHLRQATRRQEQLGQRLNAFRPEMRIERASQQLQQWQYRLRQAMQQRLGTGKQHFGQLAARLEGVSPLATLARGFSVTSTAEGQVVKKTGQLHQGDTLKTRLDDGWIESEVTAITPLKKTRRRST.

Belongs to the XseA family. As to quaternary structure, heterooligomer composed of large and small subunits.

It is found in the cytoplasm. The enzyme catalyses Exonucleolytic cleavage in either 5'- to 3'- or 3'- to 5'-direction to yield nucleoside 5'-phosphates.. In terms of biological role, bidirectionally degrades single-stranded DNA into large acid-insoluble oligonucleotides, which are then degraded further into small acid-soluble oligonucleotides. In Erwinia tasmaniensis (strain DSM 17950 / CFBP 7177 / CIP 109463 / NCPPB 4357 / Et1/99), this protein is Exodeoxyribonuclease 7 large subunit.